The following is a 201-amino-acid chain: UPF0301 protein R00917 (201 aa).

Belongs to the UPF0301 (AlgH) family.

In Rhizobium meliloti (strain 1021) (Ensifer meliloti), this protein is UPF0301 protein R00917.